Consider the following 522-residue polypeptide: 2-isopropylmalate synthase (522 aa).

The 263-residue stretch at 5 to 267 (VIIFDTTLRD…ETGINAKEIH (263 aa)) folds into the Pyruvate carboxyltransferase domain. 4 residues coordinate Mn(2+): D14, H202, H204, and N238. The tract at residues 392–522 (QLQQLVVQSD…MHKNRELGGV (131 aa)) is regulatory domain.

It belongs to the alpha-IPM synthase/homocitrate synthase family. LeuA type 1 subfamily. As to quaternary structure, homodimer. The cofactor is Mn(2+).

Its subcellular location is the cytoplasm. The catalysed reaction is 3-methyl-2-oxobutanoate + acetyl-CoA + H2O = (2S)-2-isopropylmalate + CoA + H(+). It participates in amino-acid biosynthesis; L-leucine biosynthesis; L-leucine from 3-methyl-2-oxobutanoate: step 1/4. Its function is as follows. Catalyzes the condensation of the acetyl group of acetyl-CoA with 3-methyl-2-oxobutanoate (2-ketoisovalerate) to form 3-carboxy-3-hydroxy-4-methylpentanoate (2-isopropylmalate). This Shewanella sp. (strain MR-4) protein is 2-isopropylmalate synthase.